The following is a 193-amino-acid chain: Ion-translocating oxidoreductase complex subunit A (193 aa).

6 helical membrane-spanning segments follow: residues leucine 5 to leucine 25, phenylalanine 47 to leucine 67, leucine 72 to valine 92, leucine 102 to leucine 122, alanine 134 to isoleucine 154, and serine 171 to valine 191.

The protein belongs to the NqrDE/RnfAE family. In terms of assembly, the complex is composed of six subunits: RnfA, RnfB, RnfC, RnfD, RnfE and RnfG.

The protein resides in the cell inner membrane. In terms of biological role, part of a membrane-bound complex that couples electron transfer with translocation of ions across the membrane. The chain is Ion-translocating oxidoreductase complex subunit A from Serratia proteamaculans (strain 568).